The sequence spans 429 residues: Ribosomal RNA small subunit methyltransferase B (429 aa).

S-adenosyl-L-methionine is bound by residues 254–260, Asp-277, Asp-303, and Asp-322; that span reads CAAPGGK. Cys-375 acts as the Nucleophile in catalysis. Positions 397-419 are disordered; that stretch reads ALSETGTPDQPGQQNLPGGEEGD. Residues 400–412 are compositionally biased toward polar residues; the sequence is ETGTPDQPGQQNL.

The protein belongs to the class I-like SAM-binding methyltransferase superfamily. RsmB/NOP family.

It localises to the cytoplasm. The enzyme catalyses cytidine(967) in 16S rRNA + S-adenosyl-L-methionine = 5-methylcytidine(967) in 16S rRNA + S-adenosyl-L-homocysteine + H(+). Its function is as follows. Specifically methylates the cytosine at position 967 (m5C967) of 16S rRNA. This Salmonella typhi protein is Ribosomal RNA small subunit methyltransferase B.